The following is a 142-amino-acid chain: Hdr-like menaquinol oxidoreductase cytochrome c subunit (142 aa).

The Cytoplasmic portion of the chain corresponds to 1 to 6; sequence MYNKKY. The chain crosses the membrane as a helical span at residues 7 to 27; the sequence is VIPLILVFLIGFFTPYWYNAM. Residues 28–142 lie on the Extracellular side of the membrane; that stretch reads AGTLGHVPTL…GIEELSKYFS (115 aa). 9 residues coordinate heme: Cys93, Cys96, His97, Cys104, Cys107, His108, Cys117, Cys120, and His121.

As to quaternary structure, consists of five subunits: an integral membrane subunit, a cytochrome b-like subunit, a cytochrome c subunit and two iron-sulfur subunits. In terms of processing, binds 3 heme groups per subunit.

The protein resides in the cell membrane. Functionally, has menaquinol-oxidizing activity. HmeA, HmeB and HmeE subunits may together catalyze electron transfer from menaquinol to cytochrome c. This Archaeoglobus fulgidus (strain ATCC 49558 / DSM 4304 / JCM 9628 / NBRC 100126 / VC-16) protein is Hdr-like menaquinol oxidoreductase cytochrome c subunit (hmeE).